The sequence spans 238 residues: Sugar fermentation stimulation protein homolog (238 aa).

This sequence belongs to the SfsA family.

The polypeptide is Sugar fermentation stimulation protein homolog (Haemophilus influenzae (strain 86-028NP)).